The following is a 394-amino-acid chain: Lipase 3 (394 aa).

Residues 1–20 (MTRGALKVTILLVGLGLVLA) form the signal peptide. Asn-131 carries N-linked (GlcNAc...) asparagine glycosylation. Residues Ser-164 and His-369 each act as charge relay system in the active site.

The protein belongs to the AB hydrolase superfamily. Lipase family. As to expression, fat body.

This is Lipase 3 (Lip3) from Drosophila melanogaster (Fruit fly).